The following is a 347-amino-acid chain: Holliday junction branch migration complex subunit RuvB (347 aa).

The large ATPase domain (RuvB-L) stretch occupies residues 1 to 181 (MTRNSLLNPE…FGIPVRLQFY (181 aa)). 9 residues coordinate ATP: Leu20, Arg21, Gly62, Lys65, Thr66, Thr67, Arg171, Tyr181, and Arg218. Thr66 contributes to the Mg(2+) binding site. Positions 182–252 (SIEELRQVIT…IADEALNRLE (71 aa)) are small ATPAse domain (RuvB-S). The interval 255–347 (KLGLDLMDRR…SEIKNQPGLL (93 aa)) is head domain (RuvB-H). 3 residues coordinate DNA: Arg291, Arg310, and Arg315.

Belongs to the RuvB family. In terms of assembly, homohexamer. Forms an RuvA(8)-RuvB(12)-Holliday junction (HJ) complex. HJ DNA is sandwiched between 2 RuvA tetramers; dsDNA enters through RuvA and exits via RuvB. An RuvB hexamer assembles on each DNA strand where it exits the tetramer. Each RuvB hexamer is contacted by two RuvA subunits (via domain III) on 2 adjacent RuvB subunits; this complex drives branch migration. In the full resolvosome a probable DNA-RuvA(4)-RuvB(12)-RuvC(2) complex forms which resolves the HJ.

It is found in the cytoplasm. It catalyses the reaction ATP + H2O = ADP + phosphate + H(+). Its function is as follows. The RuvA-RuvB-RuvC complex processes Holliday junction (HJ) DNA during genetic recombination and DNA repair, while the RuvA-RuvB complex plays an important role in the rescue of blocked DNA replication forks via replication fork reversal (RFR). RuvA specifically binds to HJ cruciform DNA, conferring on it an open structure. The RuvB hexamer acts as an ATP-dependent pump, pulling dsDNA into and through the RuvAB complex. RuvB forms 2 homohexamers on either side of HJ DNA bound by 1 or 2 RuvA tetramers; 4 subunits per hexamer contact DNA at a time. Coordinated motions by a converter formed by DNA-disengaged RuvB subunits stimulates ATP hydrolysis and nucleotide exchange. Immobilization of the converter enables RuvB to convert the ATP-contained energy into a lever motion, pulling 2 nucleotides of DNA out of the RuvA tetramer per ATP hydrolyzed, thus driving DNA branch migration. The RuvB motors rotate together with the DNA substrate, which together with the progressing nucleotide cycle form the mechanistic basis for DNA recombination by continuous HJ branch migration. Branch migration allows RuvC to scan DNA until it finds its consensus sequence, where it cleaves and resolves cruciform DNA. The polypeptide is Holliday junction branch migration complex subunit RuvB (Zymomonas mobilis subsp. mobilis (strain ATCC 31821 / ZM4 / CP4)).